Here is a 317-residue protein sequence, read N- to C-terminus: Melanocyte-stimulating hormone receptor (317 aa).

Over 1-37 (MPAQGSQRSLLGSLNSTLMATSSLGLSANQSGPQCLE) the chain is Extracellular. Residues Asn15 and Asn29 are each glycosylated (N-linked (GlcNAc...) asparagine). A helical transmembrane segment spans residues 38–63 (VSVPDGLFLCLGLVSLVENMLVVAAI). The Cytoplasmic portion of the chain corresponds to 64 to 72 (AKNRNLHSP). The chain crosses the membrane as a helical span at residues 73-93 (MYCFICCLALSDLLVSVSNVL). Over 94–118 (ETAVMLLLEAGALAAQATVVQQLDN) the chain is Extracellular. Residues 119 to 140 (IIDVLVCSSMVSSLCFLGAIAM) traverse the membrane as a helical segment. Residues 141 to 163 (DRYISIFYALRYHSIVTLSRAQW) lie on the Cytoplasmic side of the membrane. Residues 164 to 183 (ATAAVWAAGILSSTLFIAYY) form a helical membrane-spanning segment. Residues 184 to 191 (DHTAVLLC) lie on the Extracellular side of the membrane. Residues 192–211 (LVVFFLAMLVLMAVLYAHML) traverse the membrane as a helical segment. Residues 212-240 (TQACQHVQGITRLHKRQHLVQQGFGLKGA) are Cytoplasmic-facing. A helical transmembrane segment spans residues 241–266 (ATLTILLGVFLLCWGPFFLHLTLIAV). The Extracellular segment spans residues 267–279 (CPQHPTCSCVFKN). A helical membrane pass occupies residues 280–300 (FKLFLALIICNAIVDPLIYAF). The Cytoplasmic segment spans residues 301–317 (RXQELRKTLKEVLLFSW).

The protein belongs to the G-protein coupled receptor 1 family. Interacts with MGRN1, but does not undergo MGRN1-mediated ubiquitination; this interaction competes with GNAS-binding and thus inhibits agonist-induced cAMP production. Interacts with OPN3; the interaction results in a decrease in MC1R-mediated cAMP signaling and ultimately a decrease in melanin production in melanocytes.

The protein localises to the cell membrane. Receptor for MSH (alpha, beta and gamma) and ACTH. The activity of this receptor is mediated by G proteins which activate adenylate cyclase. Mediates melanogenesis, the production of eumelanin (black/brown) and phaeomelanin (red/yellow), via regulation of cAMP signaling in melanocytes. This chain is Melanocyte-stimulating hormone receptor (MC1R), found in Loris tardigradus (Slender loris).